Here is a 344-residue protein sequence, read N- to C-terminus: N-acetyl-gamma-glutamyl-phosphate reductase (344 aa).

Residue Cys147 is part of the active site.

Belongs to the NAGSA dehydrogenase family. Type 1 subfamily.

It is found in the cytoplasm. The catalysed reaction is N-acetyl-L-glutamate 5-semialdehyde + phosphate + NADP(+) = N-acetyl-L-glutamyl 5-phosphate + NADPH + H(+). The protein operates within amino-acid biosynthesis; L-arginine biosynthesis; N(2)-acetyl-L-ornithine from L-glutamate: step 3/4. Catalyzes the NADPH-dependent reduction of N-acetyl-5-glutamyl phosphate to yield N-acetyl-L-glutamate 5-semialdehyde. This Bacillus amyloliquefaciens (Bacillus velezensis) protein is N-acetyl-gamma-glutamyl-phosphate reductase.